We begin with the raw amino-acid sequence, 764 residues long: MVTTHNLGFPRIGAQRELKFGLERYWKGESSRDALKALGAELRARHWNAQRDLDLAPIGDFSFYDQVLDMSFTLGNLPKRVQGFHGDVLDNYFRVARGRSAQVVDEHGACCGGVSAGEMTKWFDTNYHYIVPEFHADTNFSLDPSCLLQQLAEARALGVAGKPVILGPVTYLWLGKEKDDSDRLALLPKLLPVYGALLDTLTAQGVEWVQIDEPILVTELDAEWRQALRTAYAALETRRIKLLLATYFGTLGDNLTLAASLPVDGLHVDAINARDEVDALVRELPADRVLSVGAINGRNIWKTDLNATLDWLEPLAKQLGDRLWIAPSCSLLHVPVDLASEEKLDAEIRSWLAFALQKLDELKVLATALNQGRDKVADALAANAAAIDSRRRSPRVNNPAVKAALARIDAQLGNRASPYTQRAPKQSARLNLPAFPTTTIGSFPQTADIRHARSQFKAGALDEAGYRAAMQAEIERSVREQESLGLDVLVHGEAERNDMVEYFGEQLDGYAFSQFGWVQSYGSRCVKPPILFGDISRPKAMTVEWITYAQSLTNKPMKGMLTGPVTILNWSFVRDDQPRSVSCYQLALAIRDEVLDLEKAGVRVIQIDEAALREGLPLRRAQWGEYLKWAVEAFRITANGVQDDTQIHTHMCYSEFNDIIASIADMDADVITIETSRSDMELLDAFDSFRYPNEIGPGVYDIHSPNIPTQDHIVGLMKKAAERIPAERLWVNPDCGLKTRQWAEVIPALTNMVAAAKTLRNQVQ.

5-methyltetrahydropteroyltri-L-glutamate is bound by residues 16–19 and Lys-121; that span reads RELK. L-homocysteine contacts are provided by residues 440-442 and Glu-493; that span reads IGS. L-methionine-binding positions include 440–442 and Glu-493; that span reads IGS. 5-methyltetrahydropteroyltri-L-glutamate contacts are provided by residues 524 to 525 and Trp-570; that span reads RC. L-homocysteine is bound at residue Asp-608. Residue Asp-608 participates in L-methionine binding. Glu-614 is a 5-methyltetrahydropteroyltri-L-glutamate binding site. Residues His-650, Cys-652, and Glu-674 each contribute to the Zn(2+) site. Catalysis depends on His-703, which acts as the Proton donor. Cys-735 contacts Zn(2+).

Belongs to the vitamin-B12 independent methionine synthase family. Zn(2+) is required as a cofactor.

The catalysed reaction is 5-methyltetrahydropteroyltri-L-glutamate + L-homocysteine = tetrahydropteroyltri-L-glutamate + L-methionine. It participates in amino-acid biosynthesis; L-methionine biosynthesis via de novo pathway; L-methionine from L-homocysteine (MetE route): step 1/1. Its function is as follows. Catalyzes the transfer of a methyl group from 5-methyltetrahydrofolate to homocysteine resulting in methionine formation. This is 5-methyltetrahydropteroyltriglutamate--homocysteine methyltransferase from Burkholderia ambifaria (strain ATCC BAA-244 / DSM 16087 / CCUG 44356 / LMG 19182 / AMMD) (Burkholderia cepacia (strain AMMD)).